Reading from the N-terminus, the 175-residue chain is ATP-dependent protease subunit HslV (175 aa).

Thr2 is a catalytic residue. The Na(+) site is built by Gly158, Cys161, and Thr164.

Belongs to the peptidase T1B family. HslV subfamily. In terms of assembly, a double ring-shaped homohexamer of HslV is capped on each side by a ring-shaped HslU homohexamer. The assembly of the HslU/HslV complex is dependent on binding of ATP.

The protein localises to the cytoplasm. The catalysed reaction is ATP-dependent cleavage of peptide bonds with broad specificity.. Its activity is regulated as follows. Allosterically activated by HslU binding. In terms of biological role, protease subunit of a proteasome-like degradation complex believed to be a general protein degrading machinery. This chain is ATP-dependent protease subunit HslV, found in Haemophilus influenzae (strain 86-028NP).